We begin with the raw amino-acid sequence, 260 residues long: 1-(5-phosphoribosyl)-5-[(5-phosphoribosylamino)methylideneamino] imidazole-4-carboxamide isomerase (260 aa).

Residue D8 is the Proton acceptor of the active site. Residue D130 is the Proton donor of the active site.

This sequence belongs to the HisA/HisF family.

The protein localises to the cytoplasm. The enzyme catalyses 1-(5-phospho-beta-D-ribosyl)-5-[(5-phospho-beta-D-ribosylamino)methylideneamino]imidazole-4-carboxamide = 5-[(5-phospho-1-deoxy-D-ribulos-1-ylimino)methylamino]-1-(5-phospho-beta-D-ribosyl)imidazole-4-carboxamide. Its pathway is amino-acid biosynthesis; L-histidine biosynthesis; L-histidine from 5-phospho-alpha-D-ribose 1-diphosphate: step 4/9. This Chlorobium phaeobacteroides (strain BS1) protein is 1-(5-phosphoribosyl)-5-[(5-phosphoribosylamino)methylideneamino] imidazole-4-carboxamide isomerase.